A 313-amino-acid polypeptide reads, in one-letter code: Cytochrome c biogenesis protein CcsA (313 aa).

The next 8 membrane-spanning stretches (helical) occupy residues 13–35, 43–63, 67–87, 96–116, 142–162, 219–239, 252–269, and 280–300; these read ISFS…EIAG, GMIA…IYSG, LSNL…IHMI, FLSS…TSGL, MLLS…LLVI, VIGI…VWAN, ETWA…LHTR, and AIVA…VNLL.

This sequence belongs to the CcmF/CycK/Ccl1/NrfE/CcsA family. May interact with Ccs1.

The protein resides in the plastid. Its subcellular location is the chloroplast thylakoid membrane. Its function is as follows. Required during biogenesis of c-type cytochromes (cytochrome c6 and cytochrome f) at the step of heme attachment. The sequence is that of Cytochrome c biogenesis protein CcsA from Amborella trichopoda.